The primary structure comprises 122 residues: MSTITKDQILEGVAALSVMEIVELISAMEEKFGVSAAAVAAGPAAAAEAVEEQTEFNVVLASFGDNKVAVIKAVRGATGLGLKEAKDLVESAPAVLKEGVNKDEAESLKKSLEEAGAAVEIK.

The protein belongs to the bacterial ribosomal protein bL12 family. As to quaternary structure, homodimer. Part of the ribosomal stalk of the 50S ribosomal subunit. Forms a multimeric L10(L12)X complex, where L10 forms an elongated spine to which 2 to 4 L12 dimers bind in a sequential fashion. Binds GTP-bound translation factors.

Its function is as follows. Forms part of the ribosomal stalk which helps the ribosome interact with GTP-bound translation factors. Is thus essential for accurate translation. The chain is Large ribosomal subunit protein bL12 from Yersinia enterocolitica serotype O:8 / biotype 1B (strain NCTC 13174 / 8081).